Reading from the N-terminus, the 325-residue chain is Adenine deaminase (325 aa).

Residues histidine 8, histidine 10, and histidine 186 each contribute to the Zn(2+) site. Glutamate 189 functions as the Proton donor in the catalytic mechanism. Aspartate 267 contributes to the Zn(2+) binding site. Aspartate 268 contacts substrate.

The protein belongs to the metallo-dependent hydrolases superfamily. Adenosine and AMP deaminases family. Adenine deaminase type 2 subfamily. Zn(2+) is required as a cofactor.

It carries out the reaction adenine + H2O + H(+) = hypoxanthine + NH4(+). Catalyzes the hydrolytic deamination of adenine to hypoxanthine. Plays an important role in the purine salvage pathway and in nitrogen catabolism. The polypeptide is Adenine deaminase (Chelativorans sp. (strain BNC1)).